A 277-amino-acid polypeptide reads, in one-letter code: Hematopoietically-expressed homeobox protein HHEX (277 aa).

Disordered regions lie at residues 47–69 (AAPA…NSSF) and 199–277 (WRRL…SATR). Over residues 52–63 (HSLPAPPPPTLP) the composition is skewed to pro residues. A DNA-binding region (homeobox) is located at residues 144–203 (RKGGQVRFSNEQTIELEKKFETQKYLSPPERKRLAKLLQLSERQVKTWFQNRRAKWRRLK). The segment covering 210 to 226 (TKKEEAEGTGDHGDPRS) has biased composition (basic and acidic residues). The span at 250–266 (EDPESDVSDDSDQEVDI) shows a compositional bias: acidic residues.

In all hematopoietic tissues except peripheral blood erythrocytes and in the liver and lung.

The protein resides in the nucleus. Functionally, recognizes the DNA sequence 5'-ATTAA-3'. Transcriptional repressor. May play a role in hematopoietic differentiation. In Gallus gallus (Chicken), this protein is Hematopoietically-expressed homeobox protein HHEX (HHEX).